Reading from the N-terminus, the 253-residue chain is GTP cyclohydrolase III (253 aa).

The protein belongs to the archaeal-type GTP cyclohydrolase family.

It catalyses the reaction GTP + 3 H2O = 2-amino-5-formylamino-6-(5-phospho-D-ribosylamino)pyrimidin-4(3H)-one + 2 phosphate + 2 H(+). Catalyzes the formation of 2-amino-5-formylamino-6-ribofuranosylamino-4(3H)-pyrimidinone ribonucleotide monophosphate and inorganic phosphate from GTP. Also has an independent pyrophosphate phosphohydrolase activity. This Natronomonas pharaonis (strain ATCC 35678 / DSM 2160 / CIP 103997 / JCM 8858 / NBRC 14720 / NCIMB 2260 / Gabara) (Halobacterium pharaonis) protein is GTP cyclohydrolase III.